Consider the following 299-residue polypeptide: Non-structural protein NS-S (299 aa).

The involved in inclusion bodies formation stretch occupies residues 66–69 (PNNP). Residues 148 to 220 (FEGDMVIDSC…KPLLDSLYFA (73 aa)) are interaction with host TNIP2.

This sequence belongs to the Bandavirus NS-S protein family. In terms of assembly, interacts with host TBK1; this interaction antagonizes TBK1 phosphorylation and inhibits TBK1-IRF3 interaction. Interacts with host STAT2; this interaction blocks the nuclear translocation and activation of host STAT2. Interacts with host TNIP2.

It localises to the host cytoplasm. Its function is as follows. Plays a role in the inhibition of host RLR-induced interferon-beta activation by inhibiting the phosphorylation of TANK-binding kinase 1/TBK1, thereby blocking IRF3 activation and preventing the establishment of an antiviral state. Also blocks IFN-triggered nuclear translocation and activation of host STAT2. The protein is Non-structural protein NS-S (NSS) of Alces americanus (American moose).